The primary structure comprises 148 residues: UPF0756 membrane protein NGK_2061 (148 aa).

4 consecutive transmembrane segments (helical) span residues 10 to 32 (LVTL…ATIL), 50 to 70 (HGLN…LVSG), 85 to 105 (MISA…GVPL), and 116 to 136 (LLIG…GPLI).

It belongs to the UPF0756 family.

The protein localises to the cell membrane. The protein is UPF0756 membrane protein NGK_2061 of Neisseria gonorrhoeae (strain NCCP11945).